Consider the following 377-residue polypeptide: Putative glutamate--cysteine ligase 2 (377 aa).

Belongs to the glutamate--cysteine ligase type 2 family. YbdK subfamily.

The catalysed reaction is L-cysteine + L-glutamate + ATP = gamma-L-glutamyl-L-cysteine + ADP + phosphate + H(+). In terms of biological role, ATP-dependent carboxylate-amine ligase which exhibits weak glutamate--cysteine ligase activity. This Pseudomonas aeruginosa (strain LESB58) protein is Putative glutamate--cysteine ligase 2.